The primary structure comprises 332 residues: MEYLNIIFLQTYKILFLLVPVLVSVAMIVWLDRRIWAFVQKRQGPNVVGPFGLLQSLADALKYIFKEVIIPSSSNKVIFILAPIVTMTLALVSWAVIPFSTTQVLADINVGVLYLFAVSSLGVYGIIMGGWASNSKYPFLGAIRSAAQMVSYEVSIGVIIINVLLCVGSLNLNDIIMAQENLWFIIPLFPMFVIFFISALAETNRPPFDLPEAEAELVAGYQTEYSGMMYAMFWLGEYANILLMCAMGSILFLGGWLSPIDLYPFNLIPGAIWMIFKILFLFVLFALVKAVVPRYRYDQLMRLGWKIFLPLSLTWVVLTASYLFYFNLLPVN.

The next 8 membrane-spanning stretches (helical) occupy residues 11–31 (TYKI…IVWL), 77–97 (VIFI…WAVI), 110–130 (VGVL…IMGG), 156–176 (IGVI…NDII), 182–202 (LWFI…ALAE), 240–260 (NILL…LSPI), 268–288 (IPGA…FALV), and 307–327 (IFLP…FYFN).

The protein belongs to the complex I subunit 1 family. In terms of assembly, NDH-1 is composed of 14 different subunits. Subunits NuoA, H, J, K, L, M, N constitute the membrane sector of the complex.

It localises to the cell inner membrane. It catalyses the reaction a quinone + NADH + 5 H(+)(in) = a quinol + NAD(+) + 4 H(+)(out). Functionally, NDH-1 shuttles electrons from NADH, via FMN and iron-sulfur (Fe-S) centers, to quinones in the respiratory chain. The immediate electron acceptor for the enzyme in this species is believed to be ubiquinone. Couples the redox reaction to proton translocation (for every two electrons transferred, four hydrogen ions are translocated across the cytoplasmic membrane), and thus conserves the redox energy in a proton gradient. This subunit may bind ubiquinone. This Pelagibacter ubique (strain HTCC1062) protein is NADH-quinone oxidoreductase subunit H.